The chain runs to 404 residues: Cysteine desulfurase IscS (404 aa).

Pyridoxal 5'-phosphate-binding positions include 75–76 (AT), asparagine 155, glutamine 183, and 203–205 (SAH). Lysine 206 carries the N6-(pyridoxal phosphate)lysine modification. A pyridoxal 5'-phosphate-binding site is contributed by threonine 243. The active-site Cysteine persulfide intermediate is cysteine 328. Cysteine 328 contributes to the [2Fe-2S] cluster binding site.

Belongs to the class-V pyridoxal-phosphate-dependent aminotransferase family. NifS/IscS subfamily. As to quaternary structure, homodimer. Forms a heterotetramer with IscU, interacts with other sulfur acceptors. Pyridoxal 5'-phosphate is required as a cofactor.

It is found in the cytoplasm. The enzyme catalyses (sulfur carrier)-H + L-cysteine = (sulfur carrier)-SH + L-alanine. Its pathway is cofactor biosynthesis; iron-sulfur cluster biosynthesis. Master enzyme that delivers sulfur to a number of partners involved in Fe-S cluster assembly, tRNA modification or cofactor biosynthesis. Catalyzes the removal of elemental sulfur atoms from cysteine to produce alanine. Functions as a sulfur delivery protein for Fe-S cluster synthesis onto IscU, an Fe-S scaffold assembly protein, as well as other S acceptor proteins. The protein is Cysteine desulfurase IscS of Buchnera aphidicola subsp. Schizaphis graminum (strain Sg).